The sequence spans 222 residues: Imidazoleglycerol-phosphate dehydratase (222 aa).

This sequence belongs to the imidazoleglycerol-phosphate dehydratase family.

The enzyme catalyses D-erythro-1-(imidazol-4-yl)glycerol 3-phosphate = 3-(imidazol-4-yl)-2-oxopropyl phosphate + H2O. The protein operates within amino-acid biosynthesis; L-histidine biosynthesis; L-histidine from 5-phospho-alpha-D-ribose 1-diphosphate: step 6/9. The chain is Imidazoleglycerol-phosphate dehydratase (HIS3) from Scheffersomyces stipitis (strain ATCC 58785 / CBS 6054 / NBRC 10063 / NRRL Y-11545) (Yeast).